Here is a 222-residue protein sequence, read N- to C-terminus: Probable GTP-binding protein EngB (222 aa).

An EngB-type G domain is found at 22-197 (TSAEIAFVGR…ETVVAGWFAG (176 aa)). Mg(2+) contacts are provided by Ser-37 and Thr-59. Residues 201-222 (RQADELTDGEPDDRTPDPDSAS) form a disordered region. The segment covering 212–222 (DDRTPDPDSAS) has biased composition (basic and acidic residues).

The protein belongs to the TRAFAC class TrmE-Era-EngA-EngB-Septin-like GTPase superfamily. EngB GTPase family. Requires Mg(2+) as cofactor.

Its function is as follows. Necessary for normal cell division and for the maintenance of normal septation. The polypeptide is Probable GTP-binding protein EngB (Laribacter hongkongensis (strain HLHK9)).